The following is a 1299-amino-acid chain: Probable membrane antigen 75 (1299 aa).

It is found in the virion tegument. The sequence is that of Probable membrane antigen 75 (75) from Saimiriine herpesvirus 2 (strain 11) (SaHV-2).